Reading from the N-terminus, the 217-residue chain is Meiotic expression up-regulated protein 29 (217 aa).

Residues 1–21 (MFVVKTAVLLFFALFIGNTYA) form the signal peptide. Topologically, residues 22 to 133 (YTYSLDRIQA…SGVLLHRPWK (112 aa)) are extracellular. The N-linked (GlcNAc...) asparagine glycan is linked to asparagine 84. A helical transmembrane segment spans residues 134 to 154 (LFSLKPFTAAFVLLLAASYLA). Over 155 to 217 (TACFRMLGYL…VPVPVLDESV (63 aa)) the chain is Cytoplasmic.

It is found in the membrane. In Schizosaccharomyces pombe (strain 972 / ATCC 24843) (Fission yeast), this protein is Meiotic expression up-regulated protein 29 (meu29).